The chain runs to 216 residues: MAPGSWFSPLFITVITLGLQWPQEAATFPAMPLSNLFANAVLRAQHLHLLAAETYKEFERSYIPEDQRHTNKNSQAFCYSETIPAPTGKDDAQQKSDMELLRFSLVLIQSWLTPVQYLSKVFTNNLVFGTSDRVFEKLKDLEEGIQALMRELEDRSPRGPQLLKPTYDKFDIHLRNEDALLKNYGLLSCFKKDLHKVETYLKVMKCRRFGESNCTI.

The signal sequence occupies residues 1–25 (MAPGSWFSPLFITVITLGLQWPQEA). His-46 lines the Zn(2+) pocket. Cys-78 and Cys-189 are joined by a disulfide. Glu-198 is a binding site for Zn(2+). Cys-206 and Cys-214 are oxidised to a cystine.

It belongs to the somatotropin/prolactin family.

It is found in the secreted. Functionally, growth hormone plays an important role in growth control. The polypeptide is Somatotropin (GH) (Anas platyrhynchos (Mallard)).